Consider the following 650-residue polypeptide: MVQITLPDGSQRQFPGPVTVAEVAQSIGTGLAKAALGGRVTEPGGEPRLVDTSYRLEHDAQLAIVTAKDADGLDMIRHSTAHLLAYAVKELFPDAQVTIGPVIDNGFYYDFSYKRPFTPEDLAAIEKKMTELARKDETVTREEWTRDDAVAYFKSIGEDYKAEIIASIPANETLSLYREGNFVDLCRGPHVPSTGKLKVFKLMKVAGAYWRGDSNNEMLQRIYGTAWATKDDQDAYLHMLEEAERRDHRKIGRDLDLFHFQDEAPGLIFWHPKGWALWQQVEQYMRAVYNDNGYQEVKAPQILDLSLWKKTGHWDNYRENMFTTESENRVYGLKPMNCPGHVQIFNAGLHSYRELPLRYGEFGQCHRNEPSGSLHGMMRVRGFTQDDGHIFCTEDQLQDECADFTALLQKVYRDFGFHEVLYKVATRPEKRIGSDDIWDKAETALMESLRRTGCEFEISPGEGAFYGPKIEYTLKDAIGRHWQCGTVQVDFSMPVRLGAEYVDAQDQRRAPVMLHRAILGSLERFIGMLIENHAGAMPPWLAPVQAVVCCISEPSADYAAQITQTLKKQGFRVQSDLRGEKITRKIREHSLQKVPYILVVGDKEKQNGTVAVRGLGGLDLGVIALEDFAARLAEDVAARRDVVQPESSAN.

A TGS domain is found at 1 to 66 (MVQITLPDGS…EHDAQLAIVT (66 aa)). A catalytic region spans residues 247-538 (DHRKIGRDLD…LIENHAGAMP (292 aa)). Zn(2+)-binding residues include Cys338, His389, and His515.

Belongs to the class-II aminoacyl-tRNA synthetase family. As to quaternary structure, homodimer. The cofactor is Zn(2+).

Its subcellular location is the cytoplasm. The catalysed reaction is tRNA(Thr) + L-threonine + ATP = L-threonyl-tRNA(Thr) + AMP + diphosphate + H(+). In terms of biological role, catalyzes the attachment of threonine to tRNA(Thr) in a two-step reaction: L-threonine is first activated by ATP to form Thr-AMP and then transferred to the acceptor end of tRNA(Thr). Also edits incorrectly charged L-seryl-tRNA(Thr). The chain is Threonine--tRNA ligase from Bordetella petrii (strain ATCC BAA-461 / DSM 12804 / CCUG 43448).